A 74-amino-acid polypeptide reads, in one-letter code: Protein DELETION OF SUV3 SUPPRESSOR 1(I) (74 aa).

The disordered stretch occupies residues 35 to 74 (EKEEVKEVSQQWEDDWDDDDVNDDFSRQLRKELENGTDKK). Acidic residues predominate over residues 46-57 (WEDDWDDDDVND). Residues 58-74 (DFSRQLRKELENGTDKK) show a composition bias toward basic and acidic residues.

It belongs to the DSS1/SEM1 family. Part of the 26S proteasome. Interacts with BRCA2A and BRCA2B. Interacts with UCH1 and UCH2. Can form a tripartite complex with both RAD51 and BRCA2B or both DMC1 and BRCA2B.

Functionally, subunit of the 26S proteasome which plays a role in ubiquitin-dependent proteolysis. This is Protein DELETION OF SUV3 SUPPRESSOR 1(I) from Arabidopsis thaliana (Mouse-ear cress).